The following is a 529-amino-acid chain: UDP-glucuronosyltransferase 2B33 (529 aa).

Residues 1-24 (MSVKWTSIILLIQLSFYFSSGSCG) form the signal peptide. N67 and N68 each carry an N-linked (GlcNAc...) asparagine glycan. The chain crosses the membrane as a helical span at residues 494-514 (IGFLLACVATVIFIIMKCCLF).

The protein belongs to the UDP-glycosyltransferase family.

It is found in the microsome membrane. The protein localises to the endoplasmic reticulum membrane. The catalysed reaction is glucuronate acceptor + UDP-alpha-D-glucuronate = acceptor beta-D-glucuronoside + UDP + H(+). Functionally, UDPGTs are of major importance in the conjugation and subsequent elimination of potentially toxic xenobiotics and endogenous compounds. This isozyme has glucuronidating capacity on estriol and does not catalyze the glucuronidation of beta-estradiol. Capable of conjugating 4-hydroxyestrone, androsterone, diclofenac, and hyodeoxycholic acid. The sequence is that of UDP-glucuronosyltransferase 2B33 (UGT2B33) from Macaca mulatta (Rhesus macaque).